Reading from the N-terminus, the 987-residue chain is UPF0182 protein Lxx09300 (987 aa).

7 helical membrane-spanning segments follow: residues 17–37 (VWTTLGVIVALVILFFIFAGL), 59–79 (AAIAMFFVGFLGMALPLWVVI), 108–128 (RLAMYGIPIVFGIFAGVSAAS), 167–187 (VGFASAVVLISLLATLATCYL), 206–226 (VQISVIAAVYLLLQGVSVWLD), 256–276 (AVLAVAAVFVALLFAVTAFTG), and 283–303 (VGTALLIVAALVIGAIYPWAI). 2 disordered regions span residues 700–719 (RDDAWTTPNDPTSSPTDPTL) and 886–947 (TAGD…ALQQ). Positions 705–719 (TTPNDPTSSPTDPTL) are enriched in low complexity. Residues 897 to 932 (GGSGGGSSGDAGSSAGGGSSGGGGSSAGGSSSGSGS) show a composition bias toward gly residues. Residues 933-947 (SGTQSNAALQRALQQ) are compositionally biased toward low complexity.

Belongs to the UPF0182 family.

The protein localises to the cell membrane. The protein is UPF0182 protein Lxx09300 of Leifsonia xyli subsp. xyli (strain CTCB07).